Reading from the N-terminus, the 183-residue chain is Ribosome rescue factor SmrB (183 aa).

The Smr domain maps to 98–173 (LDLHGLTQLQ…GDAALLVLIE (76 aa)).

The protein belongs to the SmrB family. Associates with collided ribosomes, but not with correctly translating polysomes.

Its function is as follows. Acts as a ribosome collision sensor. Detects stalled/collided disomes (pairs of ribosomes where the leading ribosome is stalled and a second ribosome has collided with it) and endonucleolytically cleaves mRNA at the 5' boundary of the stalled ribosome. Stalled/collided disomes form a new interface (primarily via the 30S subunits) that binds SmrB. Cleaved mRNA becomes available for tmRNA ligation, leading to ribosomal subunit dissociation and rescue of stalled ribosomes. This chain is Ribosome rescue factor SmrB, found in Shigella boydii serotype 18 (strain CDC 3083-94 / BS512).